Consider the following 200-residue polypeptide: Putative biotin transporter BioYB (200 aa).

Helical transmembrane passes span 13-33, 36-56, 61-81, 90-110, 121-141, and 158-178; these read LIGM…VAPF, VAGI…LLLG, AIAM…FAQF, GKSG…GWFL, FLIA…TYMY, and WGFM…LSFI.

The protein belongs to the BioY family.

It is found in the cell membrane. Putative biotin transporter. The protein is Putative biotin transporter BioYB (bioYB) of Bacillus subtilis (strain 168).